The sequence spans 379 residues: Putative clathrin assembly protein At1g68110 (379 aa).

The 133-residue stretch at 26–158 (NSSYRNADLE…SFLSDQIHRL (133 aa)) folds into the ENTH domain.

Its subcellular location is the membrane. It is found in the clathrin-coated pit. The protein resides in the golgi apparatus. It localises to the cytoplasmic vesicle. The protein localises to the clathrin-coated vesicle. This Arabidopsis thaliana (Mouse-ear cress) protein is Putative clathrin assembly protein At1g68110.